The following is a 685-amino-acid chain: Small ribosomal subunit protein mS39 (685 aa).

The N-terminal 10 residues, 1–10 (MAAAAVAARR), are a transit peptide targeting the mitochondrion. N6-acetyllysine is present on Lys127. PPR repeat units follow at residues 150–184 (IEDV…GTTV), 185–220 (SLET…ENLE), 254–288 (NARS…RLSA), 289–329 (DVYT…KVKP), 330–366 (NLQT…GIEP), 367–407 (SLAT…TFSP), 412–446 (DGRF…DNRK), 454–488 (RKVY…VFLP), 489–523 (HYQI…SHTF), and 572–606 (PANP…KKIP). The interval 663–685 (LGNLTELNSSDGESSSDSDSDDK) is disordered. The span at 676-685 (SSSDSDSDDK) shows a compositional bias: acidic residues.

Belongs to the mitochondrion-specific ribosomal protein mS39 family. As to quaternary structure, component of the mitochondrial ribosome small subunit (28S) which comprises a 12S rRNA and about 30 distinct proteins. Associated with the 12S mitochondrial rRNA (12S mt-rRNA).

It is found in the mitochondrion. Functionally, mitochondrial RNA-binding protein that has a role in mitochondrial translation. The protein is Small ribosomal subunit protein mS39 (Ptcd3) of Mus musculus (Mouse).